The chain runs to 661 residues: UvrABC system protein C (661 aa).

The region spanning 52 to 130 is the GIY-YIG domain; that stretch reads HKPGVYRMVD…IKRLHPRFNV (79 aa). The UVR domain occupies 240–275; that stretch reads QSIKNDMVQAMHKAAKNFDFEQAAAYRDRLSALSHI.

This sequence belongs to the UvrC family. In terms of assembly, interacts with UvrB in an incision complex.

The protein localises to the cytoplasm. Its function is as follows. The UvrABC repair system catalyzes the recognition and processing of DNA lesions. UvrC both incises the 5' and 3' sides of the lesion. The N-terminal half is responsible for the 3' incision and the C-terminal half is responsible for the 5' incision. The polypeptide is UvrABC system protein C (Bartonella henselae (strain ATCC 49882 / DSM 28221 / CCUG 30454 / Houston 1) (Rochalimaea henselae)).